A 1437-amino-acid polypeptide reads, in one-letter code: Myomesin-3 (1437 aa).

Residues 1–49 (MTLPHSLGGAGDPRPPQAMEVHRLEHRQEEEQKEERQHSLRMGSSVRRR) are disordered. Over residues 20–38 (EVHRLEHRQEEEQKEERQH) the composition is skewed to basic and acidic residues. A coiled-coil region spans residues 120–149 (RLLRQRRDWKTLRRRTEEKVQEAKELRELC). Ig-like C2-type domains are found at residues 154–246 (PWFW…AKVL) and 269–361 (PSVE…TYVL). Fibronectin type-III domains are found at residues 375-469 (SPLN…VMGD), 503-598 (PPTN…LRGP), 604-696 (PPAQ…VKQA), 702-797 (APYG…CKEW), and 804-899 (PPYD…LEDK). Ig-like C2-type domains are found at residues 1120–1205 (PYFE…LDLT) and 1334–1423 (AKVV…VTIS).

As to quaternary structure, homodimer.

It is found in the cytoplasm. The protein resides in the myofibril. The protein localises to the sarcomere. It localises to the m line. May link the intermediate filament cytoskeleton to the M-disk of the myofibrils in striated muscle. This is Myomesin-3 (MYOM3) from Homo sapiens (Human).